Consider the following 389-residue polypeptide: Urea transporter 1 (389 aa).

5 helical membrane passes run 53–73, 91–110, 116–136, 143–163, and 173–193; these read PVVLQFIDWILRGISQVVFVN, WWALTGWLGTVVSTLMALLL, LIASGLYGYNATLVGVLMAVF, FWWLLLPVCAMSMTCPIFSSA, and LPVFTLPFNMALSMYLSATGH. An N-linked (GlcNAc...) asparagine glycan is attached at N211. The next 4 helical transmembrane spans lie at 242–262, 281–301, 310–330, and 333–353; these read GGIFLGAILLSSPLMCLHAAI, IYFGLWGFNSSLACIAMGGMF, LLALGCALFTAYLGVGMANFM, and VGLPACTWPFCLATLLFLIMT.

The protein belongs to the urea transporter family. Homotrimer; each subunit contains a pore through which urea permeates. Identified in a complex with STOM. As to expression, detected in erythrocytes (at protein level). Expressed in spleen erythroblasts and tumoral kidney.

The protein localises to the cell membrane. Its subcellular location is the basolateral cell membrane. It carries out the reaction urea(in) = urea(out). Its activity is regulated as follows. Inhibited by phloretin and para-chloromercuribenzene sulfonate. Functionally, mediates the transport of urea driven by a concentration gradient across the cell membrane of erythrocytes. Also mediates the transport of urea across the cell membrane of the renal inner medullary collecting duct which is critical to the urinary concentrating mechanism. Facilitates water transport in erythrocytes. The protein is Urea transporter 1 (SLC14A1) of Homo sapiens (Human).